The chain runs to 475 residues: Ribulose bisphosphate carboxylase large chain (475 aa).

The propeptide occupies 1–2; sequence MS. Proline 3 is subject to N-acetylproline. Residue lysine 14 is modified to N6,N6,N6-trimethyllysine. Asparagine 123 and threonine 173 together coordinate substrate. The Proton acceptor role is filled by lysine 175. Residue lysine 177 participates in substrate binding. Positions 201, 203, and 204 each coordinate Mg(2+). Residue lysine 201 is modified to N6-carboxylysine. Residue histidine 294 is the Proton acceptor of the active site. Substrate contacts are provided by arginine 295, histidine 327, and serine 379.

It belongs to the RuBisCO large chain family. Type I subfamily. Heterohexadecamer of 8 large chains and 8 small chains; disulfide-linked. The disulfide link is formed within the large subunit homodimers. Mg(2+) is required as a cofactor. The disulfide bond which can form in the large chain dimeric partners within the hexadecamer appears to be associated with oxidative stress and protein turnover.

The protein localises to the plastid. It is found in the chloroplast. It carries out the reaction 2 (2R)-3-phosphoglycerate + 2 H(+) = D-ribulose 1,5-bisphosphate + CO2 + H2O. It catalyses the reaction D-ribulose 1,5-bisphosphate + O2 = 2-phosphoglycolate + (2R)-3-phosphoglycerate + 2 H(+). RuBisCO catalyzes two reactions: the carboxylation of D-ribulose 1,5-bisphosphate, the primary event in carbon dioxide fixation, as well as the oxidative fragmentation of the pentose substrate in the photorespiration process. Both reactions occur simultaneously and in competition at the same active site. The polypeptide is Ribulose bisphosphate carboxylase large chain (rbcL) (Marchantia polymorpha (Common liverwort)).